A 149-amino-acid chain; its full sequence is Large ribosomal subunit protein eL19 (149 aa).

The segment at 45-94 (VADGTIDAEDTQGNSRGRARERDAKESYGHKKGAGSRKGKAGARQNEKRE) is disordered. Positions 62 to 73 (RARERDAKESYG) are enriched in basic and acidic residues. A compositionally biased stretch (basic residues) spans 74-85 (HKKGAGSRKGKA).

It belongs to the eukaryotic ribosomal protein eL19 family. Part of the 50S ribosomal subunit.

Its function is as follows. Binds to the 23S rRNA. This is Large ribosomal subunit protein eL19 from Halobacterium salinarum (strain ATCC 700922 / JCM 11081 / NRC-1) (Halobacterium halobium).